Reading from the N-terminus, the 292-residue chain is Probable ABC transporter permease protein PH1215 (292 aa).

6 consecutive transmembrane segments (helical) span residues 10–30 (IILFLIPALILIGIFVYFAVV), 72–92 (LLLILLFVPGSLLLGLFLAIL), 106–126 (IYVLPFALSFVVTATLWAWMY), 160–180 (IIIALIWQFSGYTMIIYLAGI), 215–235 (LSAFVVLMVFSLKAFDFIWVL), and 261–281 (FAYGAAIATILLLMALVVVLP). The ABC transmembrane type-1 domain occupies 68 to 284 (LRNNLLLILL…ALVVVLPYLY (217 aa)).

It belongs to the binding-protein-dependent transport system permease family. MalFG subfamily.

Its subcellular location is the cell membrane. Functionally, probably part of a binding-protein-dependent transport system PH1214/15/16. Probably responsible for the translocation of the substrate across the membrane. The chain is Probable ABC transporter permease protein PH1215 from Pyrococcus horikoshii (strain ATCC 700860 / DSM 12428 / JCM 9974 / NBRC 100139 / OT-3).